Reading from the N-terminus, the 303-residue chain is 2-dehydropantoate 2-reductase (303 aa).

NADP(+)-binding positions include 7–12 (GPGSLG), Lys78, Asn103, and Ala129. The Proton donor role is filled by Lys185. Residues Lys185, Asn189, Asn193, Asn203, and 252–255 (NESS) contribute to the substrate site. Glu267 provides a ligand contact to NADP(+).

Belongs to the ketopantoate reductase family.

The protein localises to the cytoplasm. It catalyses the reaction (R)-pantoate + NAD(+) = 2-dehydropantoate + NADH + H(+). The catalysed reaction is (R)-pantoate + NADP(+) = 2-dehydropantoate + NADPH + H(+). It participates in cofactor biosynthesis; coenzyme A biosynthesis. Catalyzes the NAD(P)H-dependent reduction of ketopantoate into pantoic acid. This chain is 2-dehydropantoate 2-reductase, found in Halobacterium salinarum (strain ATCC 700922 / JCM 11081 / NRC-1) (Halobacterium halobium).